Reading from the N-terminus, the 295-residue chain is Glycine N-phenylacetyltransferase (295 aa).

Lys-43 carries the N6-acetyllysine modification. Lys-48 carries the post-translational modification N6-acetyllysine; alternate. Lys-48 is subject to N6-succinyllysine; alternate. N6-acetyllysine is present on Lys-80. Lys-182 bears the N6-acetyllysine; alternate mark. Lys-182 is subject to N6-succinyllysine; alternate.

The protein belongs to the glycine N-acyltransferase family.

Its subcellular location is the mitochondrion. It catalyses the reaction phenylacetyl-CoA + glycine = phenylacetylglycine + CoA + H(+). Its function is as follows. Mitochondrial acyltransferase which transfers the acyl group to the N-terminus of glycine. Can conjugate a multitude of substrates to form a variety of N-acylglycines. Catalyzes the conjugation of arylacetic acids with glycine but does not have activity towards any alkyl-CoA. The sequence is that of Glycine N-phenylacetyltransferase from Bos taurus (Bovine).